Here is a 535-residue protein sequence, read N- to C-terminus: Alpha-1,3-mannosyl-glycoprotein 4-beta-N-acetylglucosaminyltransferase A (535 aa).

Over 1–6 (MRLRNG) the chain is Cytoplasmic. The helical; Signal-anchor for type II membrane protein transmembrane segment at 7–27 (TVATALVFVTSFLTLSWYTTW) threads the bilayer. Positions 28–63 (QNGKEKLIAYQREFLALKERLRVAEHRISQRSSELN) form a coiled coil. Topologically, residues 28–535 (QNGKEKLIAY…NEIHIKKVTS (508 aa)) are lumenal. 2 N-linked (GlcNAc...) asparagine glycosylation sites follow: N77 and N458. S474 is modified (phosphoserine).

It belongs to the glycosyltransferase 54 family. Requires a divalent metal cation as cofactor. N-glycosylated.

It localises to the golgi apparatus membrane. The protein localises to the secreted. It carries out the reaction N(4)-{beta-D-GlcNAc-(1-&gt;2)-alpha-D-Man-(1-&gt;3)-[beta-D-GlcNAc-(1-&gt;2)-alpha-D-Man-(1-&gt;6)]-beta-D-Man-(1-&gt;4)-beta-D-GlcNAc-(1-&gt;4)-beta-D-GlcNAc}-L-asparaginyl-[protein] + UDP-N-acetyl-alpha-D-glucosamine = N(4)-{beta-D-GlcNAc-(1-&gt;2)-[beta-D-GlcNAc-(1-&gt;4)]-alpha-D-Man-(1-&gt;3)-[beta-D-GlcNAc-(1-&gt;2)-alpha-D-Man-(1-&gt;6)]-beta-D-Man-(1-&gt;4)-beta-D-GlcNAc-(1-&gt;4)-beta-D-GlcNAc}-L-asparaginyl-[protein] + UDP + H(+). It catalyses the reaction an N(4)-{beta-D-GlcNAc-(1-&gt;2)-alpha-D-Man-(1-&gt;3)-[alpha-D-Man-(1-&gt;6)]-beta-D-Man-(1-&gt;4)-beta-D-GlcNAc-(1-&gt;4)-beta-D-GlcNAc}-L-asparaginyl-[protein] + UDP-N-acetyl-alpha-D-glucosamine = an N(4)-{beta-D-GlcNAc-(1-&gt;2)-[beta-D-GlcNAc-(1-&gt;4)]-alpha-D-Man-(1-&gt;3)-[alpha-D-Man-(1-&gt;6)]-beta-D-Man-(1-&gt;4)-beta-D-GlcNAc-(1-&gt;4)-beta-D-GlcNAc}-L-asparaginyl-[protein] + UDP + H(+). The enzyme catalyses an N(4)-{beta-D-GlcNAc-(1-&gt;2)-alpha-D-Man-(1-&gt;3)-[beta-D-GlcNAc-(1-&gt;2)-[beta-D-GlcNAc-(1-&gt;6)]-alpha-D-Man-(1-&gt;6)]-beta-D-Man-(1-&gt;4)-beta-D-GlcNAc-(1-&gt;4)-beta-D-GlcNAc}-L-asparaginyl-[protein] + UDP-N-acetyl-alpha-D-glucosamine = an N(4)-{beta-D-GlcNAc-(1-&gt;2)-[beta-D-GlcNAc-(1-&gt;4)]-alpha-D-Man-(1-&gt;3)-[beta-D-GlcNAc-(1-&gt;2)-[beta-D-GlcNAc-(1-&gt;6)]-alpha-D-Man-(1-&gt;6)]-beta-D-Man-(1-&gt;4)-beta-D-GlcNAc-(1-&gt;4)-beta-D-GlcNAc}-L-asparaginyl-[protein] + UDP + H(+). The catalysed reaction is an N(4)-{beta-D-GlcNAc-(1-&gt;2)-alpha-D-Man-(1-&gt;3)-[beta-D-GlcNAc-(1-&gt;2)-alpha-D-Man-(1-&gt;6)]-beta-D-Man-(1-&gt;4)-beta-D-GlcNAc-(1-&gt;4)-[alpha-L-Fuc-(1-&gt;6)]-beta-D-GlcNAc}-L-asparaginyl-[protein] + UDP-N-acetyl-alpha-D-glucosamine = N(4)-{beta-D-GlcNAc-(1-&gt;2)-[beta-D-GlcNAc-(1-&gt;4)]-alpha-D-Man-(1-&gt;3)-[beta-D-GlcNAc-(1-&gt;2)-alpha-D-Man-(1-&gt;6)]-beta-D-Man-(1-&gt;4)-beta-D-GlcNAc-(1-&gt;4)-[alpha-L-Fuc-(1-&gt;6)]-beta-D-GlcNAc}-asparaginyl-[protein] + UDP + H(+). It carries out the reaction an N(4)-{beta-D-GlcNAc-(1-&gt;2)-alpha-D-Man-(1-&gt;3)-[beta-D-Gal-(1-&gt;4)-beta-D-GlcNAc-(1-&gt;2)-alpha-D-Man-(1-&gt;6)]-beta-D-Man-(1-&gt;4)-beta-D-GlcNAc-(1-&gt;4)-beta-D-GlcNAc}-L-asparaginyl-[protein] + UDP-N-acetyl-alpha-D-glucosamine = an N(4)-{beta-D-GlcNAc-(1-&gt;2)-[beta-D-GlcNAc-(1-&gt;4)]-alpha-D-Man-(1-&gt;3)-[beta-D-Gal-(1-&gt;4)-beta-D-GlcNAc-(1-&gt;2)-alpha-D-Man-(1-&gt;6)]-beta-D-Man-(1-&gt;4)-beta-D-GlcNAc-(1-&gt;4)-beta-D-GlcNAc}-L-asparaginyl-[protein] + UDP + H(+). It catalyses the reaction N(4)-{beta-D-GlcNAc-(1-&gt;2)-alpha-D-Man-(1-&gt;3)-[alpha-D-Man-(1-&gt;3)-{alpha-D-Man-(1-&gt;6)}-alpha-D-Man-(1-&gt;6)]-beta-D-Man-(1-&gt;4)-beta-D-GlcNAc-(1-&gt;4)-beta-D-GlcNAc}-asparaginyl-[protein] + UDP-N-acetyl-alpha-D-glucosamine = N(4)-{beta-D-GlcNAc-(1-&gt;2)-[beta-D-GlcNAc-(1-&gt;4)]-alpha-D-Man-(1-&gt;3)-[alpha-D-Man-(1-&gt;3)-{alpha-D-Man-(1-&gt;6)}-alpha-D-Man-(1-&gt;6)]-beta-D-Man-(1-&gt;4)-beta-D-GlcNAc-(1-&gt;4)-beta-D-GlcNAc}-asparaginyl-[protein] + UDP + H(+). The enzyme catalyses N(4)-{beta-D-GlcNAc-(1-&gt;2)-alpha-D-Man-(1-&gt;3)-beta-D-Man-(1-&gt;4)-beta-D-GlcNAc-(1-&gt;4)-beta-D-GlcNAc}-asparaginyl-[protein] + UDP-N-acetyl-alpha-D-glucosamine = N(4)-{beta-D-GlcNAc-(1-&gt;2)-[beta-D-GlcNAc-(1-&gt;4)]-alpha-D-Man-(1-&gt;3)-beta-D-Man-(1-&gt;4)-beta-D-GlcNAc-(1-&gt;4)-beta-D-GlcNAc}-asparaginyl-[protein] + UDP + H(+). It functions in the pathway protein modification; protein glycosylation. With respect to regulation, inhibited by UDP. Glycosyltransferase that catalyze the transfer of GlcNAc from UDP-GlcNAc to the GlcNAcbeta1-2Manalpha1-3 arm of the core structure of N-linked glycans through a beta1-4 linkage and participates in the production of tri- and tetra-antennary N-linked sugar chains. Involved in glucose transport by mediating SLC2A2/GLUT2 glycosylation, thereby controlling cell-surface expression of SLC2A2 in pancreatic beta cells. This is Alpha-1,3-mannosyl-glycoprotein 4-beta-N-acetylglucosaminyltransferase A from Mus musculus (Mouse).